We begin with the raw amino-acid sequence, 471 residues long: Glutamate--tRNA ligase 1 (471 aa).

Positions 10–20 (PSPTGFLHIGG) match the 'HIGH' region motif. A disordered region spans residues 113–140 (ARKEGRPPRYDGRWRDRDPSEAPKDRDP). A 'KMSKS' region motif is present at residues 239 to 243 (KLSKR). K242 serves as a coordination point for ATP.

Belongs to the class-I aminoacyl-tRNA synthetase family. Glutamate--tRNA ligase type 1 subfamily. In terms of assembly, monomer.

It localises to the cytoplasm. It catalyses the reaction tRNA(Glu) + L-glutamate + ATP = L-glutamyl-tRNA(Glu) + AMP + diphosphate. In terms of biological role, catalyzes the attachment of glutamate to tRNA(Glu) in a two-step reaction: glutamate is first activated by ATP to form Glu-AMP and then transferred to the acceptor end of tRNA(Glu). The protein is Glutamate--tRNA ligase 1 of Xanthobacter autotrophicus (strain ATCC BAA-1158 / Py2).